Reading from the N-terminus, the 118-residue chain is Protein TusC (118 aa).

The protein belongs to the DsrF/TusC family. Heterohexamer, formed by a dimer of trimers. The hexameric TusBCD complex contains 2 copies each of TusB, TusC and TusD. The TusBCD complex interacts with TusE.

It localises to the cytoplasm. Functionally, part of a sulfur-relay system required for 2-thiolation of 5-methylaminomethyl-2-thiouridine (mnm(5)s(2)U) at tRNA wobble positions. The chain is Protein TusC from Salmonella typhimurium (strain LT2 / SGSC1412 / ATCC 700720).